A 590-amino-acid chain; its full sequence is MPALRKHPQTATKHLFVTGGVVSSLGKGLTASSLGQLLTARGLQVTMQKLDPYLNVDPGTMNPFQHGEVFVTEDGAETDLDVGHYERFLDRNLSGSANVTTGQVYSSVIAKERRGEYLGDTVQVIPHITDEIKSRILAMAEPDAAGVRPDVVITEVGGTVGDIESLPFLEAARQVRHEVGRENCFFLHVSLVPYLAPSGELKTKPTQHSVAALRSIGITPDALILRCDRDVPEPLKNKIALMCDVDVDGVISTPDAPSIYDIPKVLHREELDAYVVRRLNLPFRDVDWTEWDDLLRRVHEPQETVRIALVGKYIDLSDAYLSVAEALRAGGFKHRAKVEMRWVASDDCETEHGAAAALSDVHGVLIPGGFGIRGIEGKIGAISYARKRGLPVLGLCLGLQCIVIEAARSVGITEANSAEFDPKTPDPVISTMADQRDAVAGEADLGGTMRLGAYPAVLTPNSVVAQAYQSTEVSERHRHRFEVNNAYRDRIAKSGLRFSGTSPDGHLVEFVEYDPQIHPFLVGTQAHPELKSRPTRPHPLFAAFIGAAIDYKAAERLPGMDLPEQFVPVEHSDADAPALEEPLEKSDVRG.

Positions 1 to 281 (MPALRKHPQT…DAYVVRRLNL (281 aa)) are amidoligase domain. Ser23 lines the CTP pocket. Residue Ser23 participates in UTP binding. Residues 24-29 (SLGKGL) and Asp81 contribute to the ATP site. Mg(2+)-binding residues include Asp81 and Glu155. CTP is bound by residues 162 to 164 (DIE), 202 to 207 (KTKPTQ), and Lys238. UTP is bound by residues 202 to 207 (KTKPTQ) and Lys238. The region spanning 306–554 (RIALVGKYID…IGAAIDYKAA (249 aa)) is the Glutamine amidotransferase type-1 domain. Gly369 is a binding site for L-glutamine. Cys396 functions as the Nucleophile; for glutamine hydrolysis in the catalytic mechanism. L-glutamine contacts are provided by residues 397–400 (LGLQ), Glu419, and Arg480. Active-site residues include His527 and Glu529.

This sequence belongs to the CTP synthase family. In terms of assembly, homotetramer.

It catalyses the reaction UTP + L-glutamine + ATP + H2O = CTP + L-glutamate + ADP + phosphate + 2 H(+). The catalysed reaction is L-glutamine + H2O = L-glutamate + NH4(+). It carries out the reaction UTP + NH4(+) + ATP = CTP + ADP + phosphate + 2 H(+). It functions in the pathway pyrimidine metabolism; CTP biosynthesis via de novo pathway; CTP from UDP: step 2/2. Its activity is regulated as follows. Allosterically activated by GTP, when glutamine is the substrate; GTP has no effect on the reaction when ammonia is the substrate. The allosteric effector GTP functions by stabilizing the protein conformation that binds the tetrahedral intermediate(s) formed during glutamine hydrolysis. Inhibited by the product CTP, via allosteric rather than competitive inhibition. Functionally, catalyzes the ATP-dependent amination of UTP to CTP with either L-glutamine or ammonia as the source of nitrogen. Regulates intracellular CTP levels through interactions with the four ribonucleotide triphosphates. The polypeptide is CTP synthase (Mycolicibacterium smegmatis (strain ATCC 700084 / mc(2)155) (Mycobacterium smegmatis)).